Here is a 296-residue protein sequence, read N- to C-terminus: MGTIVLKMTAEQISVLQKDLASYATATKNPYAFFSAKVDGTSVIAYTSGKVTFQGAKPEILASRFGYQAEPKQSPDGQNLALIGSDEVGNGSYFGGLAVVASLVTPADHAFLKSLGVDDSKNLNDSKIRQIAPLLEEKIPHKALLLSPRKYNEVVGDGKAHNAVSVKVALHNQAIFLLLQSGAKPDKIVIDAFISEKNYQKYFKNERNHFEFPITLEEKAEGKYLAVAVSSIIARNLFLKNLDKLSQEVGYTLPSGAGAKSDQVAAKLLQAYGDQALQTTAKYHFANTKKAYQRLK.

Residues 80–296 (LALIGSDEVG…NTKKAYQRLK (217 aa)) enclose the RNase H type-2 domain. A divalent metal cation-binding residues include D86, E87, and D191.

Belongs to the RNase HII family. RnhC subfamily. Requires Mn(2+) as cofactor. Mg(2+) is required as a cofactor.

It is found in the cytoplasm. The enzyme catalyses Endonucleolytic cleavage to 5'-phosphomonoester.. Functionally, endonuclease that specifically degrades the RNA of RNA-DNA hybrids. This chain is Ribonuclease HIII, found in Streptococcus thermophilus (strain ATCC BAA-250 / LMG 18311).